The sequence spans 72 residues: High-potential iron-sulfur protein isozyme 1 (72 aa).

The [4Fe-4S] cluster site is built by cysteine 34, cysteine 37, cysteine 51, and cysteine 65.

Belongs to the high-potential iron-sulfur protein (HiPIP) family. In terms of assembly, homodimer.

Specific class of high-redox-potential 4Fe-4S ferredoxins. Functions in anaerobic electron transport in most purple and in some other photosynthetic bacteria and in at least one genus (Paracoccus) of halophilic, denitrifying bacteria. The sequence is that of High-potential iron-sulfur protein isozyme 1 (hip1) from Ectothiorhodospira shaposhnikovii (Ectothiorhodospira vacuolata).